The following is a 182-amino-acid chain: Ribosome maturation factor RimM (182 aa).

In terms of domain architecture, PRC barrel spans 103–182 (DGSYYWKDLM…TIEVDWDPGF (80 aa)).

It belongs to the RimM family. In terms of assembly, binds ribosomal protein uS19.

It is found in the cytoplasm. Functionally, an accessory protein needed during the final step in the assembly of 30S ribosomal subunit, possibly for assembly of the head region. Essential for efficient processing of 16S rRNA. May be needed both before and after RbfA during the maturation of 16S rRNA. It has affinity for free ribosomal 30S subunits but not for 70S ribosomes. This is Ribosome maturation factor RimM from Citrobacter koseri (strain ATCC BAA-895 / CDC 4225-83 / SGSC4696).